The sequence spans 197 residues: Potassium-transporting ATPase KdpC subunit (197 aa).

The chain crosses the membrane as a helical span at residues 9–29 (LVVTLLLAALLCGAYPVLVTG).

It belongs to the KdpC family. In terms of assembly, the system is composed of three essential subunits: KdpA, KdpB and KdpC.

Its subcellular location is the cell inner membrane. Functionally, part of the high-affinity ATP-driven potassium transport (or Kdp) system, which catalyzes the hydrolysis of ATP coupled with the electrogenic transport of potassium into the cytoplasm. This subunit acts as a catalytic chaperone that increases the ATP-binding affinity of the ATP-hydrolyzing subunit KdpB by the formation of a transient KdpB/KdpC/ATP ternary complex. This is Potassium-transporting ATPase KdpC subunit from Nitratidesulfovibrio vulgaris (strain DSM 19637 / Miyazaki F) (Desulfovibrio vulgaris).